The primary structure comprises 154 residues: UPF0039 protein sll0451 (154 aa).

The 144-residue stretch at 8 to 151 folds into the N-acetyltransferase domain; sequence QRFNDISGEA…EHISMIFRVP (144 aa).

It belongs to the UPF0039 (ElaA) family.

The chain is UPF0039 protein sll0451 from Synechocystis sp. (strain ATCC 27184 / PCC 6803 / Kazusa).